A 782-amino-acid chain; its full sequence is E3 UFM1-protein ligase 1 homolog (782 aa).

The tract at residues 404-477 (NASTQELEDD…GSRGGGGVNK (74 aa)) is disordered. The span at 443 to 453 (KSTKKHQRGKA) shows a compositional bias: basic residues.

Belongs to the UFL1 family.

E3 UFM1-protein ligase that mediates ufmylation of target proteins. This Drosophila erecta (Fruit fly) protein is E3 UFM1-protein ligase 1 homolog.